An 890-amino-acid polypeptide reads, in one-letter code: Alanine--tRNA ligase (890 aa).

Zn(2+)-binding residues include H573, H577, C675, and H679.

This sequence belongs to the class-II aminoacyl-tRNA synthetase family. Requires Zn(2+) as cofactor.

Its subcellular location is the cytoplasm. The enzyme catalyses tRNA(Ala) + L-alanine + ATP = L-alanyl-tRNA(Ala) + AMP + diphosphate. Functionally, catalyzes the attachment of alanine to tRNA(Ala) in a two-step reaction: alanine is first activated by ATP to form Ala-AMP and then transferred to the acceptor end of tRNA(Ala). Also edits incorrectly charged Ser-tRNA(Ala) and Gly-tRNA(Ala) via its editing domain. In Streptomyces avermitilis (strain ATCC 31267 / DSM 46492 / JCM 5070 / NBRC 14893 / NCIMB 12804 / NRRL 8165 / MA-4680), this protein is Alanine--tRNA ligase.